A 156-amino-acid chain; its full sequence is MFNVVLVAPEIPPNTGNVIRLCANTGAHLHLIEPLGFPLDDARMRRAGLDYHEYAQMRVHRDWDAFVAAETPDPARMFAFTTRGSGRFHDHAFLSGDWFVFGSETRGLPAELLERFPNEQRVRLPMRPDNRSLNLSNTVAVVVFEAWRQAGFEGGA.

The S-adenosyl-L-methionine site is built by glycine 102, leucine 124, and serine 132.

This sequence belongs to the class IV-like SAM-binding methyltransferase superfamily. RNA methyltransferase TrmH family. TrmL subfamily. As to quaternary structure, homodimer.

The protein localises to the cytoplasm. It carries out the reaction cytidine(34) in tRNA + S-adenosyl-L-methionine = 2'-O-methylcytidine(34) in tRNA + S-adenosyl-L-homocysteine + H(+). The enzyme catalyses 5-carboxymethylaminomethyluridine(34) in tRNA(Leu) + S-adenosyl-L-methionine = 5-carboxymethylaminomethyl-2'-O-methyluridine(34) in tRNA(Leu) + S-adenosyl-L-homocysteine + H(+). Its function is as follows. Methylates the ribose at the nucleotide 34 wobble position in the two leucyl isoacceptors tRNA(Leu)(CmAA) and tRNA(Leu)(cmnm5UmAA). Catalyzes the methyl transfer from S-adenosyl-L-methionine to the 2'-OH of the wobble nucleotide. This Burkholderia cenocepacia (strain HI2424) protein is tRNA (cytidine(34)-2'-O)-methyltransferase.